The primary structure comprises 147 residues: Hemoglobin subunit epsilon (147 aa).

One can recognise a Globin domain in the interval 3–147; sequence HFTAEEKVAI…VAIALGHKYH (145 aa). Residues S14 and S51 each carry the phosphoserine modification. Positions 64 and 93 each coordinate heme b.

Belongs to the globin family. As to quaternary structure, heterotetramer of two alpha chains and two epsilon chains in early embryonic hemoglobin Gower-2; two zeta chains and two epsilon chains in early embryonic hemoglobin Gower-1. Red blood cells.

In terms of biological role, the epsilon chain is a beta-type chain of early mammalian embryonic hemoglobin. This chain is Hemoglobin subunit epsilon (HBE1), found in Cebus kaapori (Ka'apor capuchin).